The primary structure comprises 86 residues: Putative membrane protein insertion efficiency factor (86 aa).

The protein belongs to the UPF0161 family.

It is found in the cell inner membrane. Functionally, could be involved in insertion of integral membrane proteins into the membrane. The chain is Putative membrane protein insertion efficiency factor from Oleidesulfovibrio alaskensis (strain ATCC BAA-1058 / DSM 17464 / G20) (Desulfovibrio alaskensis).